We begin with the raw amino-acid sequence, 160 residues long: Putative 4-hydroxy-4-methyl-2-oxoglutarate aldolase (160 aa).

Substrate-binding positions include 75 to 78 (GDQL) and Arg97. Asp98 serves as a coordination point for a divalent metal cation.

It belongs to the class II aldolase/RraA-like family. In terms of assembly, homotrimer. A divalent metal cation serves as cofactor.

It catalyses the reaction 4-hydroxy-4-methyl-2-oxoglutarate = 2 pyruvate. It carries out the reaction oxaloacetate + H(+) = pyruvate + CO2. In terms of biological role, catalyzes the aldol cleavage of 4-hydroxy-4-methyl-2-oxoglutarate (HMG) into 2 molecules of pyruvate. Also contains a secondary oxaloacetate (OAA) decarboxylase activity due to the common pyruvate enolate transition state formed following C-C bond cleavage in the retro-aldol and decarboxylation reactions. The sequence is that of Putative 4-hydroxy-4-methyl-2-oxoglutarate aldolase from Vibrio parahaemolyticus serotype O3:K6 (strain RIMD 2210633).